Consider the following 565-residue polypeptide: NAD-dependent malic enzyme (565 aa).

The active-site Proton donor is Tyr-104. Arg-157 serves as a coordination point for NAD(+). Lys-175 (proton acceptor) is an active-site residue. A divalent metal cation contacts are provided by Glu-246, Asp-247, and Asp-270. Residues Asp-270 and Asn-418 each contribute to the NAD(+) site.

This sequence belongs to the malic enzymes family. Homotetramer. Mg(2+) serves as cofactor. The cofactor is Mn(2+).

It carries out the reaction (S)-malate + NAD(+) = pyruvate + CO2 + NADH. The enzyme catalyses oxaloacetate + H(+) = pyruvate + CO2. The chain is NAD-dependent malic enzyme from Enterobacter sp. (strain 638).